The primary structure comprises 366 residues: Ribosomal RNA large subunit methyltransferase M (366 aa).

S-adenosyl-L-methionine-binding positions include Ser-188, 221 to 224, Asp-240, Asp-260, and Asp-277; that span reads CPGG. Lys-306 serves as the catalytic Proton acceptor.

The protein belongs to the class I-like SAM-binding methyltransferase superfamily. RNA methyltransferase RlmE family. RlmM subfamily. Monomer.

The protein resides in the cytoplasm. The catalysed reaction is cytidine(2498) in 23S rRNA + S-adenosyl-L-methionine = 2'-O-methylcytidine(2498) in 23S rRNA + S-adenosyl-L-homocysteine + H(+). In terms of biological role, catalyzes the 2'-O-methylation at nucleotide C2498 in 23S rRNA. This chain is Ribosomal RNA large subunit methyltransferase M, found in Salmonella paratyphi C (strain RKS4594).